A 172-amino-acid chain; its full sequence is Endoribonuclease YbeY (172 aa).

Histidine 137, histidine 141, and histidine 147 together coordinate Zn(2+).

The protein belongs to the endoribonuclease YbeY family. Zn(2+) serves as cofactor.

The protein resides in the cytoplasm. Single strand-specific metallo-endoribonuclease involved in late-stage 70S ribosome quality control and in maturation of the 3' terminus of the 16S rRNA. In Dehalococcoides mccartyi (strain ATCC BAA-2266 / KCTC 15142 / 195) (Dehalococcoides ethenogenes (strain 195)), this protein is Endoribonuclease YbeY.